A 484-amino-acid polypeptide reads, in one-letter code: Malonate-semialdehyde dehydrogenase 3 (484 aa).

The NAD(+) site is built by Phe152, Lys176, Glu179, Arg180, and Ser229. Residue Cys284 is the Nucleophile of the active site. Glu384 provides a ligand contact to NAD(+).

The protein belongs to the aldehyde dehydrogenase family. IolA subfamily. As to quaternary structure, homotetramer.

It catalyses the reaction 3-oxopropanoate + NAD(+) + CoA + H2O = hydrogencarbonate + acetyl-CoA + NADH + H(+). It carries out the reaction 2-methyl-3-oxopropanoate + NAD(+) + CoA + H2O = propanoyl-CoA + hydrogencarbonate + NADH + H(+). The protein operates within polyol metabolism; myo-inositol degradation into acetyl-CoA; acetyl-CoA from myo-inositol: step 7/7. In terms of biological role, catalyzes the oxidation of malonate semialdehyde (MSA) and methylmalonate semialdehyde (MMSA) into acetyl-CoA and propanoyl-CoA, respectively. Is involved in a myo-inositol catabolic pathway. Bicarbonate, and not CO2, is the end-product of the enzymatic reaction. This Geobacillus kaustophilus (strain HTA426) protein is Malonate-semialdehyde dehydrogenase 3.